Reading from the N-terminus, the 339-residue chain is Ketol-acid reductoisomerase (NADP(+)) (339 aa).

The KARI N-terminal Rossmann domain occupies 1 to 182 (MRVYYDRDAD…GGGRAGIIET (182 aa)). Residues 24 to 27 (YGSQ), Arg-48, Ser-51, and 83 to 86 (DEGQ) contribute to the NADP(+) site. His-108 is an active-site residue. Gly-134 lines the NADP(+) pocket. The 146-residue stretch at 183–328 (SFKEEVETDL…EKLRGMMPWI (146 aa)) folds into the KARI C-terminal knotted domain. Mg(2+) is bound by residues Asp-191, Glu-195, Glu-227, and Glu-231. Ser-252 is a binding site for substrate.

It belongs to the ketol-acid reductoisomerase family. Mg(2+) is required as a cofactor.

The enzyme catalyses (2R)-2,3-dihydroxy-3-methylbutanoate + NADP(+) = (2S)-2-acetolactate + NADPH + H(+). It catalyses the reaction (2R,3R)-2,3-dihydroxy-3-methylpentanoate + NADP(+) = (S)-2-ethyl-2-hydroxy-3-oxobutanoate + NADPH + H(+). It functions in the pathway amino-acid biosynthesis; L-isoleucine biosynthesis; L-isoleucine from 2-oxobutanoate: step 2/4. Its pathway is amino-acid biosynthesis; L-valine biosynthesis; L-valine from pyruvate: step 2/4. Its function is as follows. Involved in the biosynthesis of branched-chain amino acids (BCAA). Catalyzes an alkyl-migration followed by a ketol-acid reduction of (S)-2-acetolactate (S2AL) to yield (R)-2,3-dihydroxy-isovalerate. In the isomerase reaction, S2AL is rearranged via a Mg-dependent methyl migration to produce 3-hydroxy-3-methyl-2-ketobutyrate (HMKB). In the reductase reaction, this 2-ketoacid undergoes a metal-dependent reduction by NADPH to yield (R)-2,3-dihydroxy-isovalerate. The polypeptide is Ketol-acid reductoisomerase (NADP(+)) (Gluconacetobacter diazotrophicus (strain ATCC 49037 / DSM 5601 / CCUG 37298 / CIP 103539 / LMG 7603 / PAl5)).